The sequence spans 447 residues: MNQNHTILQNLPVGQKVGIAFSGGLDTSAALLWMKLKGALPYAYTANLGQPDEDDYNAIPKKAMEYGAENARLIDCRAQLAHEGIAAIQCGAFHVSTGGIAYFNTTPLGRAVTGTMLVSAMKEDDVNIWGDGSTYKGNDIERFYRYGLLTNPALKIYKPWLDQQFIDELGGRHEMSEFLIANGFNYKMSVEKAYSTDSNMLGATHEAKDLEFLNSGIKIVKPIMGIAFWDENVEIKPEEVSVRFEEGVPVALNGKEYADPVELFLEANRIGGRHGLGMSDQIENRIIEAKSRGIYEAPGMALFHIAYERLVTGIHNEDTIEQYRINGLRLGRLLYQGRWFDSQALMLRETAQRWVAKAITGEVTLELRRGNDYSILNTESPNLTYQPERLSMEKVEDAAFTPLDRIGQLTMRNLDITDTRAKLGIYSQSGLLALGEGSVLPQLGNKQ.

ATP contacts are provided by residues 20–28 and Ala46; that span reads AFSGGLDTS. Residue Tyr102 participates in L-citrulline binding. ATP is bound by residues Gly132 and Thr134. Positions 134, 138, and 139 each coordinate L-aspartate. An L-citrulline-binding site is contributed by Asn138. Asp139 is a binding site for ATP. L-citrulline-binding residues include Arg142 and Ser195. ATP is bound at residue Asp197. L-citrulline is bound by residues Thr204, Glu206, and Glu283.

Belongs to the argininosuccinate synthase family. Type 2 subfamily. In terms of assembly, homotetramer.

The protein localises to the cytoplasm. The catalysed reaction is L-citrulline + L-aspartate + ATP = 2-(N(omega)-L-arginino)succinate + AMP + diphosphate + H(+). It participates in amino-acid biosynthesis; L-arginine biosynthesis; L-arginine from L-ornithine and carbamoyl phosphate: step 2/3. The protein is Argininosuccinate synthase (argG) of Neisseria meningitidis serogroup A / serotype 4A (strain DSM 15465 / Z2491).